The following is a 95-amino-acid chain: Protein TusB (95 aa).

This sequence belongs to the DsrH/TusB family. In terms of assembly, heterohexamer, formed by a dimer of trimers. The hexameric TusBCD complex contains 2 copies each of TusB, TusC and TusD. The TusBCD complex interacts with TusE.

It is found in the cytoplasm. Part of a sulfur-relay system required for 2-thiolation of 5-methylaminomethyl-2-thiouridine (mnm(5)s(2)U) at tRNA wobble positions. This chain is Protein TusB, found in Salmonella arizonae (strain ATCC BAA-731 / CDC346-86 / RSK2980).